Reading from the N-terminus, the 212-residue chain is Ribonuclease HII (212 aa).

One can recognise an RNase H type-2 domain in the interval 7–212 (SQILGIDEAG…TIENITKSTE (206 aa)). A divalent metal cation-binding residues include aspartate 13, glutamate 14, and aspartate 111.

This sequence belongs to the RNase HII family. Requires Mn(2+) as cofactor. Mg(2+) is required as a cofactor.

The protein localises to the cytoplasm. The catalysed reaction is Endonucleolytic cleavage to 5'-phosphomonoester.. Endonuclease that specifically degrades the RNA of RNA-DNA hybrids. The sequence is that of Ribonuclease HII from Methanosphaera stadtmanae (strain ATCC 43021 / DSM 3091 / JCM 11832 / MCB-3).